We begin with the raw amino-acid sequence, 357 residues long: Peptide chain release factor 1 (357 aa).

Residue Gln234 is modified to N5-methylglutamine. Positions 282–313 (DSKKQEQRSNNRKQQVGSGDRSERIRTYNFPQ) are disordered.

It belongs to the prokaryotic/mitochondrial release factor family. In terms of processing, methylated by PrmC. Methylation increases the termination efficiency of RF1.

It is found in the cytoplasm. Peptide chain release factor 1 directs the termination of translation in response to the peptide chain termination codons UAG and UAA. The chain is Peptide chain release factor 1 from Borreliella afzelii (strain PKo) (Borrelia afzelii).